A 110-amino-acid chain; its full sequence is Insulin (110 aa).

Positions 1–24 (MALWMRLLPLLALLALWAPAPTRA) are cleaved as a signal peptide. Intrachain disulfides connect Cys31-Cys96, Cys43-Cys109, and Cys95-Cys100. Residues 57 to 87 (EVEDLQVRDVELAGAPGEGGLQPLALEGALQ) constitute a propeptide, c peptide.

It belongs to the insulin family. Heterodimer of a B chain and an A chain linked by two disulfide bonds.

It localises to the secreted. Functionally, insulin decreases blood glucose concentration. It increases cell permeability to monosaccharides, amino acids and fatty acids. It accelerates glycolysis, the pentose phosphate cycle, and glycogen synthesis in liver. This chain is Insulin (INS), found in Canis lupus familiaris (Dog).